Consider the following 158-residue polypeptide: Protein E6 (158 aa).

2 zinc fingers span residues 32–68 and 105–141; these read CVYCRRQLQRTEVYEFAFSDLCVVYRDGVPFAACQSC and CMSCLKPLCPAEKLRHLTTKRRLHKIAGNFTGQCRHC. Positions 156-158 match the PDZ-binding domain motif; the sequence is TQV.

This sequence belongs to the papillomaviridae E6 protein family. As to quaternary structure, forms homodimers. Interacts with ubiquitin-protein ligase UBE3A/E6-AP and thus forms a complex with human TP53. Interacts with human NFX1 and MAGI3. Interacts with human IRF3; this interaction inhibits the establishment of antiviral state. Interacts with human TYK2; this interaction inhibits JAK-STAT activation by interferon alpha. Interacts with host DLG1; this interaction leads to the proteasomal degradation of DLG1.

It localises to the host cytoplasm. It is found in the host nucleus. In terms of biological role, plays a major role in the induction and maintenance of cellular transformation. Acts mainly as an oncoprotein by stimulating the destruction of many host cell key regulatory proteins. E6 associates with host UBE3A/E6-AP ubiquitin-protein ligase, and inactivates tumor suppressors TP53 and TP73 by targeting them to the 26S proteasome for degradation. In turn, DNA damage and chromosomal instabilities increase and lead to cell proliferation and cancer development. The complex E6/E6AP targets several other substrates to degradation via the proteasome including host DLG1 or NFX1, a repressor of human telomerase reverse transcriptase (hTERT). The resulting increased expression of hTERT prevents the shortening of telomere length leading to cell immortalization. Other cellular targets including BAK1, Fas-associated death domain-containing protein (FADD) and procaspase 8, are degraded by E6/E6AP causing inhibition of apoptosis. E6 also inhibits immune response by interacting with host IRF3 and TYK2. These interactions prevent IRF3 transcriptional activities and inhibit TYK2-mediated JAK-STAT activation by interferon alpha resulting in inhibition of the interferon signaling pathway. This is Protein E6 from Homo sapiens (Human).